The following is a 218-amino-acid chain: uncharacterized protein (218 aa).

Residues H57, H59, D61, H62, H138, D158, and H199 each contribute to the Zn(2+) site.

It belongs to the metallo-beta-lactamase superfamily. Glyoxalase II family. Zn(2+) is required as a cofactor.

This is an uncharacterized protein from Mycobacterium leprae (strain TN).